The chain runs to 658 residues: NADH-ubiquinone oxidoreductase chain 5 (658 aa).

17 consecutive transmembrane segments (helical) span residues T4–I23, I30–I52, L81–Y103, R112–T129, Y133–F155, L168–G190, L200–A222, V243–R262, T272–F294, V301–L319, L329–A351, P364–M386, I409–L431, L452–L471, V505–Y527, L607–T629, and L639–L656.

It belongs to the complex I subunit 5 family.

The protein resides in the mitochondrion inner membrane. It catalyses the reaction a ubiquinone + NADH + 5 H(+)(in) = a ubiquinol + NAD(+) + 4 H(+)(out). Its function is as follows. Core subunit of the mitochondrial membrane respiratory chain NADH dehydrogenase (Complex I) that is believed to belong to the minimal assembly required for catalysis. Complex I functions in the transfer of electrons from NADH to the respiratory chain. The immediate electron acceptor for the enzyme is believed to be ubiquinone. The sequence is that of NADH-ubiquinone oxidoreductase chain 5 (nad5) from Talaromyces marneffei (Penicillium marneffei).